The sequence spans 273 residues: Cilia- and flagella-associated protein 298-B (273 aa).

This sequence belongs to the CFAP298 family.

It localises to the cytoplasm. The protein resides in the cytoskeleton. The protein localises to the cilium basal body. Plays a role in motile cilium function, possibly by acting on outer dynein arm assembly. Seems to be important for initiation rather than maintenance of cilium motility. Required for correct positioning of the cilium at the apical cell surface, suggesting an additional role in the planar cell polarity (PCP) pathway. May suppress canonical Wnt signaling activity. The chain is Cilia- and flagella-associated protein 298-B (cfap298-b) from Xenopus laevis (African clawed frog).